Reading from the N-terminus, the 167-residue chain is 3-isopropylmalate dehydratase small subunit (167 aa).

This sequence belongs to the LeuD family. LeuD type 2 subfamily. In terms of assembly, heterodimer of LeuC and LeuD.

The catalysed reaction is (2R,3S)-3-isopropylmalate = (2S)-2-isopropylmalate. It functions in the pathway amino-acid biosynthesis; L-leucine biosynthesis; L-leucine from 3-methyl-2-oxobutanoate: step 2/4. Catalyzes the isomerization between 2-isopropylmalate and 3-isopropylmalate, via the formation of 2-isopropylmaleate. This is 3-isopropylmalate dehydratase small subunit from Sulfurimonas denitrificans (strain ATCC 33889 / DSM 1251) (Thiomicrospira denitrificans (strain ATCC 33889 / DSM 1251)).